The primary structure comprises 475 residues: Kynureninase (475 aa).

Pyridoxal 5'-phosphate contacts are provided by residues L142, T143, 170 to 173, D255, H258, and Y280; that span reads FPSD. K281 bears the N6-(pyridoxal phosphate)lysine mark. Pyridoxal 5'-phosphate is bound by residues W320 and N348.

The protein belongs to the kynureninase family. As to quaternary structure, homodimer. Requires pyridoxal 5'-phosphate as cofactor.

The protein resides in the cytoplasm. The catalysed reaction is L-kynurenine + H2O = anthranilate + L-alanine + H(+). It catalyses the reaction 3-hydroxy-L-kynurenine + H2O = 3-hydroxyanthranilate + L-alanine + H(+). It participates in amino-acid degradation; L-kynurenine degradation; L-alanine and anthranilate from L-kynurenine: step 1/1. It functions in the pathway cofactor biosynthesis; NAD(+) biosynthesis; quinolinate from L-kynurenine: step 2/3. Its function is as follows. Catalyzes the cleavage of L-kynurenine (L-Kyn) and L-3-hydroxykynurenine (L-3OHKyn) into anthranilic acid (AA) and 3-hydroxyanthranilic acid (3-OHAA), respectively. The protein is Kynureninase (bna5) of Botryotinia fuckeliana (strain B05.10) (Noble rot fungus).